The sequence spans 272 residues: RNA exonuclease 4 (272 aa).

Residues 1 to 17 (MTTTLSSNWKKLSSKLN) are compositionally biased toward low complexity. The tract at residues 1-33 (MTTTLSSNWKKLSSKLNQGSKVTKQPVKGKNGK) is disordered. Residues 99-250 (YLAMDCEFVG…EDARATMLLF (152 aa)) form the Exonuclease domain.

This sequence belongs to the REXO4 family.

Its subcellular location is the nucleus. In terms of biological role, exoribonuclease involved in ribosome biosynthesis. Involved in the processing of ITS1, the internal transcribed spacer localized between the 18S and 5.8S rRNAs. This chain is RNA exonuclease 4 (REX4), found in Debaryomyces hansenii (strain ATCC 36239 / CBS 767 / BCRC 21394 / JCM 1990 / NBRC 0083 / IGC 2968) (Yeast).